The following is a 418-amino-acid chain: Endoglucanase EG-II (418 aa).

An N-terminal signal peptide occupies residues 1 to 21 (MNKSVAPLLLAASILYGGAVA). Pyrrolidone carboxylic acid is present on Q22. One can recognise a CBM1 domain in the interval 22–57 (QQTVWGQCGGIGWSGPTNCAPGSACSTLNPYYAQCI). A linker region spans residues 58–91 (PGATTITTSTRPPSGPTTTTRATSTSSSTPPTSS). A disordered region spans residues 63–91 (ITTSTRPPSGPTTTTRATSTSSSTPPTSS). Positions 92–418 (GVRFAGVNIA…SLVSSCLARK (327 aa)) are catalytic. A disulfide bridge links C107 with C113. A glycan (N-linked (GlcNAc) asparagine) is linked at N124. The cysteines at positions 183 and 190 are disulfide-linked. E239 serves as the catalytic Proton donor/acceptor. Intrachain disulfides connect C323/C359 and C364/C414. The Nucleophile role is filled by E350.

It belongs to the glycosyl hydrolase 5 (cellulase A) family.

The protein localises to the secreted. The catalysed reaction is Endohydrolysis of (1-&gt;4)-beta-D-glucosidic linkages in cellulose, lichenin and cereal beta-D-glucans.. Its function is as follows. Endoglucanase (EG) that cleaves the internal beta-1,4-glucosidic bonds in cellulose. The degradation of cellulose involves an interplay between different cellulolytic enzymes. Hydrolysis starts with EGs, which cut internal glycosidic linkages to reduce the polymerization degree of the substrate and creates new chain ends for exocellobiohydrolases (CBHs). The CBH release the disaccharide cellobiose from the non-reducing end of the cellulose polymer chain. Finally, beta-1,4-glucosidases hydrolyze the cellobiose and other short cello-oligosaccharides into glucose units. The protein is Endoglucanase EG-II (egl2) of Hypocrea jecorina (Trichoderma reesei).